The sequence spans 226 residues: Enolase-phosphatase E1 (226 aa).

Belongs to the HAD-like hydrolase superfamily. MasA/MtnC family. Monomer. Mg(2+) is required as a cofactor.

It catalyses the reaction 5-methylsulfanyl-2,3-dioxopentyl phosphate + H2O = 1,2-dihydroxy-5-(methylsulfanyl)pent-1-en-3-one + phosphate. The protein operates within amino-acid biosynthesis; L-methionine biosynthesis via salvage pathway; L-methionine from S-methyl-5-thio-alpha-D-ribose 1-phosphate: step 3/6. Its pathway is amino-acid biosynthesis; L-methionine biosynthesis via salvage pathway; L-methionine from S-methyl-5-thio-alpha-D-ribose 1-phosphate: step 4/6. In terms of biological role, bifunctional enzyme that catalyzes the enolization of 2,3-diketo-5-methylthiopentyl-1-phosphate (DK-MTP-1-P) into the intermediate 2-hydroxy-3-keto-5-methylthiopentenyl-1-phosphate (HK-MTPenyl-1-P), which is then dephosphorylated to form the acireductone 1,2-dihydroxy-3-keto-5-methylthiopentene (DHK-MTPene). This is Enolase-phosphatase E1 from Shewanella frigidimarina (strain NCIMB 400).